An 828-amino-acid chain; its full sequence is Mediator of RNA polymerase II transcription subunit 16 (828 aa).

WD repeat units follow at residues 68–107 (GHQE…ANSW), 199–241 (RCRV…VSEK), 264–308 (DKFP…LPLN), 622–663 (NQGS…CLPV), and 777–816 (FPTE…TCLC).

This sequence belongs to the Mediator complex subunit 16 family. Component of the Mediator complex.

It localises to the nucleus. Component of the Mediator complex, a coactivator involved in the regulated transcription of nearly all RNA polymerase II-dependent genes. Mediator functions as a bridge to convey information from gene-specific regulatory proteins to the basal RNA polymerase II transcription machinery. Mediator is recruited to promoters by direct interactions with regulatory proteins and serves as a scaffold for the assembly of a functional preinitiation complex with RNA polymerase II and the general transcription factors. This is Mediator of RNA polymerase II transcription subunit 16 (med16) from Xenopus tropicalis (Western clawed frog).